The primary structure comprises 91 residues: Elongation factor 1-beta (91 aa).

Belongs to the EF-1-beta/EF-1-delta family.

Functionally, promotes the exchange of GDP for GTP in EF-1-alpha/GDP, thus allowing the regeneration of EF-1-alpha/GTP that could then be used to form the ternary complex EF-1-alpha/GTP/AAtRNA. The chain is Elongation factor 1-beta (ef1b) from Pyrococcus abyssi (strain GE5 / Orsay).